The primary structure comprises 71 residues: Brevinin-1CG4 (71 aa).

The first 22 residues, 1 to 22, serve as a signal peptide directing secretion; it reads MFTLKKSLLLLFFLGTINLSLC. The propeptide at 23–45 is removed in mature form; that stretch reads EQERNADEEERRDDSDKRDVEVE. C65 and C71 are oxidised to a cystine.

The protein belongs to the frog skin active peptide (FSAP) family. Brevinin subfamily. In terms of tissue distribution, expressed by the skin glands.

The protein resides in the secreted. Its function is as follows. Antimicrobial peptide active against a variety of Gram-positive and some Gram-negative bacterial strains. Has antifungal activity against C.albicans ATCC 10231 and a slime mold isolate. Has hemolytic activity against human erythrocytes. The polypeptide is Brevinin-1CG4 (Amolops chunganensis (Chungan torrent frog)).